A 300-amino-acid chain; its full sequence is MKQYLITGGTGMVGSQLVNEIKKSDSHITILTRHDQISNDKKISYVNWAKSGWEHKVPQNIDVVINLAGATLNKRWTPEYKQTLMLSRIQSTQALYELFKSRNKAPKVLFNASATGYYPPDLFMSYTEVYKTLPFDFLSDIVYQWERFAQQFEQLGTRVVIGRFGMILSNEGGALQTMKLPYKYYIGGKLGSGQQWYSWIHINDLIQAILFLINNESASGPFNLTAPIPERQNLFGYTLARAMHKPHETWAPSLAMRLILGQMSTVVLDTQKVLPNKIQALGFQFKYSNLKMALEDLIKE.

This sequence belongs to the NAD(P)-dependent epimerase/dehydratase family. SDR39U1 subfamily.

This chain is Epimerase family protein SAV0769, found in Staphylococcus aureus (strain Mu50 / ATCC 700699).